Reading from the N-terminus, the 541-residue chain is Probable inorganic phosphate transporter 1-12 (541 aa).

Topologically, residues 1–26 are cytoplasmic; the sequence is MGRQDQQLQVLNALDAAKTQWYHFTA. The chain crosses the membrane as a helical span at residues 27–47; that stretch reads IIVAGMGFFTDAYDLFCISLV. At 48-70 the chain is on the extracellular side; that stretch reads TKLLGRIYYTDPASPTPGSLPPN. The chain crosses the membrane as a helical span at residues 71 to 91; sequence IAAAVNGVALCGTLSGQLFFG. Topologically, residues 92–100 are cytoplasmic; sequence WLGDKLGRK. The chain crosses the membrane as a helical span at residues 101–121; that stretch reads SVYGMTLLLMVICSIASGLSF. The Extracellular portion of the chain corresponds to 122 to 124; it reads SHT. The helical transmembrane segment at 125–145 threads the bilayer; it reads PTSVMATLCFFRFWLGFGIGG. Topologically, residues 146 to 163 are cytoplasmic; the sequence is DYPLSATIMSEYANKKTR. Residues 164 to 184 form a helical membrane-spanning segment; sequence GAFIAAVFAMQGFGILAGGVV. At 185–213 the chain is on the extracellular side; sequence TLAMSAGFQAAFPAPAYEVNAAASTVPQA. Residues 214–234 form a helical membrane-spanning segment; sequence DYVWRIILMLGALPAILTYYW. The Cytoplasmic portion of the chain corresponds to 235–297; sequence RMKMPETARY…ARFAKRHGAH (63 aa). The chain crosses the membrane as a helical span at residues 298-318; that stretch reads LLGTAATWFLVDVAYYSQNLF. Over 319–349 the chain is Extracellular; it reads QKDIFTSIHWIPKARTMSELEEVFRISRAQT. A helical membrane pass occupies residues 350-370; sequence LIALCGTVPGYWFTVFLIDII. The Cytoplasmic segment spans residues 371–374; the sequence is GRFK. Residues 375–395 traverse the membrane as a helical segment; that stretch reads IQLLGFAGMTAFMLGLAIPYH. Residues 396-403 lie on the Extracellular side of the membrane; it reads HWTMPGNQ. A helical membrane pass occupies residues 404 to 424; that stretch reads VIFVFLYGFTFFFANFGPNAT. At 425 to 443 the chain is on the cytoplasmic side; that stretch reads TFIVPAEIFPARLRSTCHG. Residues 444 to 464 traverse the membrane as a helical segment; it reads ISAASGKAGAIIGAFGFLYAA. Topologically, residues 465–484 are extracellular; it reads QPQDKAHVDAGYKPGIGVRN. The chain crosses the membrane as a helical span at residues 485-505; sequence ALFVLAGCNLVGFLMTWMLVP. The Cytoplasmic segment spans residues 506-541; it reads ESKGKSLEEMSGEADDEEASANGGATAVNSSGVEMV. Positions 512–541 are disordered; the sequence is LEEMSGEADDEEASANGGATAVNSSGVEMV. A compositionally biased stretch (acidic residues) spans 515-524; that stretch reads MSGEADDEEA. Residues 532-541 are compositionally biased toward polar residues; the sequence is AVNSSGVEMV.

Belongs to the major facilitator superfamily. Phosphate:H(+) symporter (TC 2.A.1.9) family.

It localises to the membrane. Its function is as follows. High-affinity transporter for external inorganic phosphate. The chain is Probable inorganic phosphate transporter 1-12 (PHT1-12) from Oryza sativa subsp. japonica (Rice).